The following is a 158-amino-acid chain: 2-C-methyl-D-erythritol 2,4-cyclodiphosphate synthase (158 aa).

Residues Asp-9 and His-11 each coordinate a divalent metal cation. Residues 9-11 (DVH) and 35-36 (HS) contribute to the 4-CDP-2-C-methyl-D-erythritol 2-phosphate site. His-43 contacts a divalent metal cation. 4-CDP-2-C-methyl-D-erythritol 2-phosphate contacts are provided by residues 57–59 (DIG), 62–66 (FPDTD), 101–107 (AQKPKMA), 133–136 (TTTE), Phe-140, and Arg-143.

It belongs to the IspF family. Homotrimer. A divalent metal cation is required as a cofactor.

The catalysed reaction is 4-CDP-2-C-methyl-D-erythritol 2-phosphate = 2-C-methyl-D-erythritol 2,4-cyclic diphosphate + CMP. Its pathway is isoprenoid biosynthesis; isopentenyl diphosphate biosynthesis via DXP pathway; isopentenyl diphosphate from 1-deoxy-D-xylulose 5-phosphate: step 4/6. Its function is as follows. Involved in the biosynthesis of isopentenyl diphosphate (IPP) and dimethylallyl diphosphate (DMAPP), two major building blocks of isoprenoid compounds. Catalyzes the conversion of 4-diphosphocytidyl-2-C-methyl-D-erythritol 2-phosphate (CDP-ME2P) to 2-C-methyl-D-erythritol 2,4-cyclodiphosphate (ME-CPP) with a corresponding release of cytidine 5-monophosphate (CMP). The polypeptide is 2-C-methyl-D-erythritol 2,4-cyclodiphosphate synthase (Bacillus cytotoxicus (strain DSM 22905 / CIP 110041 / 391-98 / NVH 391-98)).